Here is a 135-residue protein sequence, read N- to C-terminus: BolA-like protein 1 (135 aa).

Serine 81 is subject to Phosphoserine. Residues 114-135 (WKENPQLDTSPACLGGSKKSRN) are disordered.

It belongs to the BolA/IbaG family. As to quaternary structure, interacts with GLRX5.

The protein resides in the mitochondrion. Acts as a mitochondrial iron-sulfur (Fe-S) cluster assembly factor that facilitates (Fe-S) cluster insertion into a subset of mitochondrial proteins. Probably acts together with the monothiol glutaredoxin GLRX5. May protect cells against oxidative stress. The polypeptide is BolA-like protein 1 (BOLA1) (Bos taurus (Bovine)).